We begin with the raw amino-acid sequence, 677 residues long: Methionine--tRNA ligase (677 aa).

A 'HIGH' region motif is present at residues 15–25 (PYANGSIHLGH). Zn(2+) contacts are provided by Cys-146, Cys-149, Cys-159, and Cys-162. The 'KMSKS' region signature appears at 333 to 337 (KMSKS). Lys-336 is a binding site for ATP. Residues 575-677 (DFAKIDLRVA…SGAKPGQQVK (103 aa)) enclose the tRNA-binding domain.

This sequence belongs to the class-I aminoacyl-tRNA synthetase family. MetG type 1 subfamily. In terms of assembly, homodimer. Zn(2+) serves as cofactor.

Its subcellular location is the cytoplasm. The enzyme catalyses tRNA(Met) + L-methionine + ATP = L-methionyl-tRNA(Met) + AMP + diphosphate. In terms of biological role, is required not only for elongation of protein synthesis but also for the initiation of all mRNA translation through initiator tRNA(fMet) aminoacylation. This chain is Methionine--tRNA ligase, found in Cronobacter sakazakii (strain ATCC BAA-894) (Enterobacter sakazakii).